We begin with the raw amino-acid sequence, 172 residues long: Adenylate kinase isoenzyme 6 (172 aa).

Gly-13, Gly-15, Lys-16, Thr-17, and Thr-18 together coordinate ATP. The NMP stretch occupies residues 33 to 56; sequence NVGDLAREEQLYDGYDEEYDCPIL. The segment at 33–56 is NMPbind; that stretch reads NVGDLAREEQLYDGYDEEYDCPIL. Residues 108 to 118 form an LID region; the sequence is TRGYNEKKLTD. ATP is bound by residues Arg-109 and Lys-148.

This sequence belongs to the adenylate kinase family. AK6 subfamily. Monomer and homodimer. Interacts with small ribosomal subunit protein uS11. Not a structural component of 43S pre-ribosomes, but transiently interacts with them by binding to uS11. Interacts with COIL (via C-terminus). As to expression, expressed in heart, brain, placenta, lung, liver, skeletal muscle, kidney, pancreas, chorionic villi and the central nervous system.

Its subcellular location is the cytoplasm. It localises to the nucleus. It is found in the nucleoplasm. The protein localises to the cajal body. It carries out the reaction AMP + ATP = 2 ADP. The enzyme catalyses ATP + H2O = ADP + phosphate + H(+). In terms of biological role, broad-specificity nucleoside monophosphate (NMP) kinase that catalyzes the reversible transfer of the terminal phosphate group between nucleoside triphosphates and monophosphates. Also has ATPase activity. Involved in the late cytoplasmic maturation steps of the 40S ribosomal particles, specifically 18S rRNA maturation. While NMP activity is not required for ribosome maturation, ATPase activity is. Associates transiently with small ribosomal subunit protein uS11. ATP hydrolysis breaks the interaction with uS11. May temporarily remove uS11 from the ribosome to enable a conformational change of the ribosomal RNA that is needed for the final maturation step of the small ribosomal subunit. Its NMP activity may have a role in nuclear energy homeostasis. AMP and dAMP are the preferred substrates, but CMP and dCMP are also good substrates. IMP is phosphorylated to a much lesser extent. All nucleoside triphosphates ATP, GTP, UTP, CTP, dATP, dCTP, dGTP, and TTP are accepted as phosphate donors. CTP is the best phosphate donor, followed by UTP, ATP, GTP and dCTP. May be involved in regulation of Cajal body (CB) formation. The sequence is that of Adenylate kinase isoenzyme 6 from Homo sapiens (Human).